A 357-amino-acid chain; its full sequence is DNA replication and repair protein RecF (357 aa).

Residue Gly-30–Thr-37 participates in ATP binding.

It belongs to the RecF family.

The protein resides in the cytoplasm. The RecF protein is involved in DNA metabolism; it is required for DNA replication and normal SOS inducibility. RecF binds preferentially to single-stranded, linear DNA. It also seems to bind ATP. In Escherichia coli O139:H28 (strain E24377A / ETEC), this protein is DNA replication and repair protein RecF.